The following is a 226-amino-acid chain: UPF0758 protein PsycPRwf_0491 (226 aa).

Residues 102 to 224 form the MPN domain; it reads SLNRSQVVKD…TLSFAETATA (123 aa). Histidine 173, histidine 175, and aspartate 186 together coordinate Zn(2+). A JAMM motif motif is present at residues 173 to 186; sequence HNHPNQDATPSAAD.

The protein belongs to the UPF0758 family.

The protein is UPF0758 protein PsycPRwf_0491 of Psychrobacter sp. (strain PRwf-1).